The sequence spans 465 residues: MKVYNTLTNKKEEFLPLVPGEVKMYVCGPTVYNFFHIGNARTFVVFDTIRRYLEYRGYKVKFIQNFTDIDDKMIKKANEEGTTVKELGDRFIKEYYKDADDLNIERATKNPRATEFMKEIIKFVSDLIEKGYAYEIDGDVYFSTKKFNSYGKLSGQNLEELQLGARINVDERKKDPMDFAIWKSQKPEEPAWESPWGMGRPGWHIECSCMAYNLLGETIDIHAGGSDLSFPHHENEIAQSEARTGKQFAKYWLHSAFVNVNNQKMSKSLNNFFTAREILEKYDADVLRMFMLSGHYRTQINFSMELLDSTKAALDRLYNSINNLENLLDEVKNEGLRDEELKYRDELQKYKEKYIEKMDDDFNTADAISVIFDLIRDVNTNITIESSKELVKYALDLIRELGSPLGILQKSTKASLEEEIERLIQERQKARKEKDWALADKIRDDLKERGIVLEDTPQGVRWKQI.

Position 27 (cysteine 27) interacts with Zn(2+). Positions 29–39 match the 'HIGH' region motif; the sequence is PTVYNFFHIGN. Cysteine 207, histidine 232, and glutamate 236 together coordinate Zn(2+). The 'KMSKS' region signature appears at 264-268; it reads KMSKS. ATP is bound at residue lysine 267.

It belongs to the class-I aminoacyl-tRNA synthetase family. In terms of assembly, monomer. The cofactor is Zn(2+).

Its subcellular location is the cytoplasm. It catalyses the reaction tRNA(Cys) + L-cysteine + ATP = L-cysteinyl-tRNA(Cys) + AMP + diphosphate. In Clostridium botulinum (strain 657 / Type Ba4), this protein is Cysteine--tRNA ligase.